Here is a 286-residue protein sequence, read N- to C-terminus: uncharacterized protein (286 aa).

An AB hydrolase-1 domain is found at 26 to 268; the sequence is PLIILCHGFC…DACHYDIYEG (243 aa).

This sequence belongs to the AB hydrolase superfamily.

This is an uncharacterized protein from Escherichia coli.